The sequence spans 248 residues: Probable transcriptional regulatory protein SO_2432 (248 aa).

It belongs to the TACO1 family.

The protein localises to the cytoplasm. The chain is Probable transcriptional regulatory protein SO_2432 from Shewanella oneidensis (strain ATCC 700550 / JCM 31522 / CIP 106686 / LMG 19005 / NCIMB 14063 / MR-1).